Reading from the N-terminus, the 59-residue chain is Large ribosomal subunit protein bL32 (59 aa).

A compositionally biased stretch (basic residues) spans 1-20 (MAVPKKKTSKGKRNQRHATW). The interval 1 to 22 (MAVPKKKTSKGKRNQRHATWKG) is disordered.

Belongs to the bacterial ribosomal protein bL32 family.

The protein is Large ribosomal subunit protein bL32 of Prochlorococcus marinus (strain NATL1A).